A 311-amino-acid polypeptide reads, in one-letter code: tRNA-cytidine(32) 2-sulfurtransferase (311 aa).

A PP-loop motif motif is present at residues S47–S52. The [4Fe-4S] cluster site is built by C122, C125, and C213.

The protein belongs to the TtcA family. As to quaternary structure, homodimer. Mg(2+) is required as a cofactor. The cofactor is [4Fe-4S] cluster.

It localises to the cytoplasm. It carries out the reaction cytidine(32) in tRNA + S-sulfanyl-L-cysteinyl-[cysteine desulfurase] + AH2 + ATP = 2-thiocytidine(32) in tRNA + L-cysteinyl-[cysteine desulfurase] + A + AMP + diphosphate + H(+). Its pathway is tRNA modification. Catalyzes the ATP-dependent 2-thiolation of cytidine in position 32 of tRNA, to form 2-thiocytidine (s(2)C32). The sulfur atoms are provided by the cysteine/cysteine desulfurase (IscS) system. This is tRNA-cytidine(32) 2-sulfurtransferase from Citrobacter koseri (strain ATCC BAA-895 / CDC 4225-83 / SGSC4696).